Reading from the N-terminus, the 218-residue chain is MTDGDYDYLIKLLALGDSGVGKTTFLYRYTDNKFNPKFITTVGIDFREKRVVYNAQGPNGSSGKAFKVHLQLWDTAGQERFRSLTTAFFRDAMGFLLMFDLTSQQSFLNVRNWMSQLQANAYCENPDIVLIGNKADLPDQREVNERQARELADKYGIPYFETSAATGQNVEKAVETLLDLIMKRMEQCVEKTQIPDTVNGGNSGNLDGEKPPEKKCIC.

Residue threonine 2 is modified to N-acetylthreonine. Residue 16–24 (GDSGVGKTT) participates in GTP binding. Residues 38 to 46 (FITTVGIDF) carry the Effector region motif. GTP-binding positions include 74–78 (DTAGQ), 133–136 (NKAD), and 163–165 (SAA). A disulfide bridge links cysteine 123 with cysteine 188. The disordered stretch occupies residues 194–218 (IPDTVNGGNSGNLDGEKPPEKKCIC). The span at 207–218 (DGEKPPEKKCIC) shows a compositional bias: basic and acidic residues. 2 S-geranylgeranyl cysteine lipidation sites follow: cysteine 216 and cysteine 218. Cysteine 218 bears the Cysteine methyl ester mark.

This sequence belongs to the small GTPase superfamily. Rab family. In terms of assembly, interacts with SYTL2, SYTL4, MYRIP and MLPH. Interacts with RPH3A and RPH3A. Interacts (GDP-bound form preferentially) with DENND10. As to expression, expressed primarily in testis.

Its subcellular location is the membrane. It is found in the late endosome. It carries out the reaction GTP + H2O = GDP + phosphate + H(+). Regulated by guanine nucleotide exchange factors (GEFs) which promote the exchange of bound GDP for free GTP, GTPase activating proteins (GAPs) which increase the GTP hydrolysis activity, and GDP dissociation inhibitors which inhibit the dissociation of the nucleotide from the GTPase. Activated by GEFs such as DENND10. Functionally, small GTPase which cycles between active GTP-bound and inactive GDP-bound states. In its active state, binds to a variety of effector proteins to regulate homeostasis of late endocytic pathway, including endosomal positioning, maturation and secretion. Plays a role in NTRK2/TRKB axonal anterograde transport by facilitating the association of NTRK2/TRKB with KLC1. May be involved in targeting uroplakins to urothelial apical membranes. This is Ras-related protein Rab-27B (RAB27B) from Homo sapiens (Human).